Reading from the N-terminus, the 196-residue chain is ATP-dependent Clp protease proteolytic subunit (196 aa).

The active-site Nucleophile is S99. The active site involves H124.

Belongs to the peptidase S14 family. In terms of assembly, fourteen ClpP subunits assemble into 2 heptameric rings which stack back to back to give a disk-like structure with a central cavity, resembling the structure of eukaryotic proteasomes.

It is found in the cytoplasm. It carries out the reaction Hydrolysis of proteins to small peptides in the presence of ATP and magnesium. alpha-casein is the usual test substrate. In the absence of ATP, only oligopeptides shorter than five residues are hydrolyzed (such as succinyl-Leu-Tyr-|-NHMec, and Leu-Tyr-Leu-|-Tyr-Trp, in which cleavage of the -Tyr-|-Leu- and -Tyr-|-Trp bonds also occurs).. Cleaves peptides in various proteins in a process that requires ATP hydrolysis. Has a chymotrypsin-like activity. Plays a major role in the degradation of misfolded proteins. This is ATP-dependent Clp protease proteolytic subunit from Nitratiruptor sp. (strain SB155-2).